Here is a 2319-residue protein sequence, read N- to C-terminus: AT-rich interactive domain-containing protein 1B (2319 aa).

2 stretches are compositionally biased toward low complexity: residues 1-21 and 43-56; these read MAAR…ARAG and GARG…APGP. 6 disordered regions span residues 1–74, 155–306, 321–414, 487–546, 577–1062, and 1085–1129; these read MAAR…VHHH, VGEA…GGGG, APAS…GAGA, RFAG…AGAA, QQRS…LMNT, and DMMS…KITK. N-acetylalanine is present on Ala-2. Over residues 57-68 the composition is skewed to gly residues; that stretch reads MLGGGGDGGGGL. Basic residues predominate over residues 165 to 188; sequence QQHHHHHHAHHHHHHAHHLHHHHA. Composition is skewed to low complexity over residues 189 to 215 and 343 to 363; these read LQQQ…QQQH and SPGM…PGSM. Residues 365-379 are compositionally biased toward polar residues; it reads PLQNSHEGYPNSQCN. The segment covering 388–414 has biased composition (gly residues); the sequence is GAGGGGGGGGGGGGGSGGGGGGGGAGA. Arg-487 is subject to Asymmetric dimethylarginine. Over residues 489 to 510 the composition is skewed to polar residues; that stretch reads AGQNQHPSGATPTLNQLLTSPS. The short motif at 502-506 is the LXXLL element; sequence LNQLL. Low complexity predominate over residues 536–546; it reads PQSQAAAAGAA. Residues Ser-585 and Ser-599 each carry the phosphoserine modification. Arg-608 bears the Asymmetric dimethylarginine mark. The segment covering 620–630 has biased composition (low complexity); that stretch reads SQPQQSSPYPG. Position 640 is an asymmetric dimethylarginine (Arg-640). 6 stretches are compositionally biased toward low complexity: residues 651-670, 677-687, 695-712, 767-783, 811-832, and 840-849; these read GAMA…YGQQ, QQGQQPYYSQQ, PQAQ…QPQQ, SSAV…GDQS, GSPV…IPGS, and GSQSESSSHP. Positions 866–880 are enriched in polar residues; it reads TQRNPQMAQYGPQQT. The segment covering 881 to 892 has biased composition (low complexity); that stretch reads GPSMSPHPSPGG. 2 stretches are compositionally biased toward polar residues: residues 899–923 and 947–958; these read SSFQ…QGNY and SANNQMHGQGPS. 2 stretches are compositionally biased toward low complexity: residues 980-994 and 1014-1028; these read PGNM…PGMS and EAAA…NSAQ. The segment covering 1029-1062 has biased composition (polar residues); it reads SRQGSFPGMNQSGLMASSSPYSQPMNNSSSLMNT. Positions 1136–1227 constitute an ARID domain; sequence EPERKLWVDR…YLFAFECKIE (92 aa). Disordered stretches follow at residues 1230-1334, 1346-1443, 1475-1647, and 1782-1852; these read EEPP…QQGM, EPNK…PNYK, NQYG…FLPS, and DHNA…KQAS. 2 stretches are compositionally biased toward polar residues: residues 1254–1273 and 1287–1304; these read ANSG…SNSM and STPH…SSTI. A compositionally biased stretch (low complexity) spans 1305 to 1319; that stretch reads SVHDPFSDVSDSSFP. Polar residues-rich tracts occupy residues 1320–1334 and 1364–1388; these read KRNS…QQGM and PFMT…SGAM. The span at 1426–1440 shows a compositional bias: low complexity; that stretch reads PPYGGHQPGLYPQQP. A Nuclear localization signal motif is present at residues 1441–1460; that stretch reads NYKRHMDGMYGPPAKRHEGD. 2 stretches are compositionally biased toward polar residues: residues 1522–1534 and 1579–1601; these read LQSS…QQNM and ESQW…SMQP. Phosphoserine is present on residues Ser-1625, Ser-1638, and Ser-1642. A compositionally biased stretch (polar residues) spans 1627 to 1641; that stretch reads ASFQRSLENRMSPSK. The segment covering 1782–1791 has biased composition (basic and acidic residues); it reads DHNAARKDDS. Ser-1798 is subject to Phosphoserine. The span at 1799 to 1823 shows a compositional bias: acidic residues; sequence GKEEEDAECIDDDEEDEEDEEEDSE. Residues 1842 to 1852 are compositionally biased toward basic and acidic residues; sequence ADPKEKPKQAS. An N6-acetyllysine modification is found at Lys-1860. Disordered stretches follow at residues 1904-1941 and 1954-1973; these read FESK…QQEK and RPGA…SSKF. The segment covering 1925-1940 has biased composition (basic and acidic residues); that stretch reads RKKEQEGKGDSEEQQE. Positions 2119-2123 match the LXXLL motif; sequence LDGLL.

In terms of assembly, component of SWI/SNF chromatin remodeling complexes, in some of which it can be mutually exclusive with ARID1B/BAF250B. The canonical complex contains a catalytic subunit (either SMARCA4/BRG1/BAF190A or SMARCA2/BRM/BAF190B) and at least SMARCE1, ACTL6A/BAF53, SMARCC1/BAF155, SMARCC2/BAF170, and SMARCB1/SNF5/BAF47. Other subunits specific to each of the complexes may also be present permitting several possible combinations developmentally and tissue specific. Component of the BAF (SWI/SNF-A) complex, which includes at least actin (ACTB), ARID1A/BAF250A, ARID1B/BAF250B, SMARCA2/BRM, SMARCA4/BRG1/BAF190A, ACTL6A/BAF53, ACTL6B/BAF53B, SMARCE1/BAF57, SMARCC1/BAF155, SMARCC2/BAF170, SMARCB1/SNF5/INI1, and one or more SMARCD1/BAF60A, SMARCD2/BAF60B, or SMARCD3/BAF60C. In muscle cells, the BAF complex also contains DPF3. Component of neural progenitors-specific chromatin remodeling complex (npBAF complex) composed of at least, ARID1A/BAF250A or ARID1B/BAF250B, SMARCD1/BAF60A, SMARCD3/BAF60C, SMARCA2/BRM/BAF190B, SMARCA4/BRG1/BAF190A, SMARCB1/BAF47, SMARCC1/BAF155, SMARCE1/BAF57, SMARCC2/BAF170, PHF10/BAF45A, ACTL6A/BAF53A and actin. Component of neuron-specific chromatin remodeling complex (nBAF complex) composed of at least, ARID1A/BAF250A or ARID1B/BAF250B, SMARCD1/BAF60A, SMARCD3/BAF60C, SMARCA2/BRM/BAF190B, SMARCA4/BRG1/BAF190A, SMARCB1/BAF47, SMARCC1/BAF155, SMARCE1/BAF57, SMARCC2/BAF170, DPF1/BAF45B, DPF3/BAF45C, ACTL6B/BAF53B and actin. Component of a SWI/SNF-like EBAFb complex, at least composed of SMARCA4/BRG1/BAF190A, SMARCB1/BAF47/SNF5, ACTL6A/BAF53A, SMARCE1/BAF57, SMARCD1/BAF60A, SMARCD2/BAF60B, SMARCC1/BAF155, SMARCC2/BAF170, ARID1B/BAF250B, MLLT1/ENL and actin. Interacts through its C-terminus with SMARCA2/BRM/BAF190B and SMARCA4/BRG1/BAF190A. Interacts with SMARCC1/BAF155. In terms of tissue distribution, widely expressed with high levels in heart, skeletal muscle and kidney.

It localises to the nucleus. Involved in transcriptional activation and repression of select genes by chromatin remodeling (alteration of DNA-nucleosome topology). Component of SWI/SNF chromatin remodeling complexes that carry out key enzymatic activities, changing chromatin structure by altering DNA-histone contacts within a nucleosome in an ATP-dependent manner. Belongs to the neural progenitors-specific chromatin remodeling complex (npBAF complex) and the neuron-specific chromatin remodeling complex (nBAF complex). During neural development a switch from a stem/progenitor to a postmitotic chromatin remodeling mechanism occurs as neurons exit the cell cycle and become committed to their adult state. The transition from proliferating neural stem/progenitor cells to postmitotic neurons requires a switch in subunit composition of the npBAF and nBAF complexes. As neural progenitors exit mitosis and differentiate into neurons, npBAF complexes which contain ACTL6A/BAF53A and PHF10/BAF45A, are exchanged for homologous alternative ACTL6B/BAF53B and DPF1/BAF45B or DPF3/BAF45C subunits in neuron-specific complexes (nBAF). The npBAF complex is essential for the self-renewal/proliferative capacity of the multipotent neural stem cells. The nBAF complex along with CREST plays a role regulating the activity of genes essential for dendrite growth. Binds DNA non-specifically. In Homo sapiens (Human), this protein is AT-rich interactive domain-containing protein 1B.